The chain runs to 1397 residues: Probable cyclin-dependent serine/threonine-protein kinase DDB_G0292550 (1397 aa).

Residues 4 to 287 enclose the Protein kinase domain; sequence FQIIELIGSG…TKEALNHPWF (284 aa). Residues 10-18 and Lys33 contribute to the ATP site; that span reads IGSGSYGKV. Residue Asp124 is the Proton acceptor of the active site. Disordered regions lie at residues 412 to 567, 671 to 728, 763 to 831, 845 to 949, 996 to 1101, 1115 to 1174, 1227 to 1324, and 1340 to 1397; these read NNNN…NNNN, PLSI…NNGF, NEMG…NGNN, NNNN…YANH, NGLA…NTHN, NNGF…NSPV, NSAS…SFGL, and KKKK…IVLD. Positions 676–715 are enriched in low complexity; the sequence is SQHHNTSSSDTHNNNNNNYNNNNNNNNNINNNNINSIHNQ. Composition is skewed to low complexity over residues 845-941, 1012-1021, 1028-1101, and 1115-1155; these read NNNN…NGNG, NSNNNNSGNN, NTFN…NTHN, and NNGF…TKNN. Residues 1156–1171 show a composition bias toward polar residues; that stretch reads TQFGPNILSSTQTSHN. Low complexity-rich tracts occupy residues 1253 to 1321 and 1354 to 1380; these read NNNN…NNNS and SSSQ…SQTQ.

It belongs to the protein kinase superfamily. CMGC Ser/Thr protein kinase family. CDC2/CDKX subfamily.

The catalysed reaction is L-seryl-[protein] + ATP = O-phospho-L-seryl-[protein] + ADP + H(+). It carries out the reaction L-threonyl-[protein] + ATP = O-phospho-L-threonyl-[protein] + ADP + H(+). The chain is Probable cyclin-dependent serine/threonine-protein kinase DDB_G0292550 from Dictyostelium discoideum (Social amoeba).